Consider the following 288-residue polypeptide: Acetyl-coenzyme A carboxylase carboxyl transferase subunit beta (288 aa).

The CoA carboxyltransferase N-terminal domain maps to 32–288 (MWAKCPSCKR…LRLHSLEGWR (257 aa)). Zn(2+) contacts are provided by C36, C39, C54, and C57. A C4-type zinc finger spans residues 36 to 57 (CPSCKRTLYTKEMGAEKICPHC).

This sequence belongs to the AccD/PCCB family. As to quaternary structure, acetyl-CoA carboxylase is a heterohexamer composed of biotin carboxyl carrier protein (AccB), biotin carboxylase (AccC) and two subunits each of ACCase subunit alpha (AccA) and ACCase subunit beta (AccD). It depends on Zn(2+) as a cofactor.

It is found in the cytoplasm. It catalyses the reaction N(6)-carboxybiotinyl-L-lysyl-[protein] + acetyl-CoA = N(6)-biotinyl-L-lysyl-[protein] + malonyl-CoA. Its pathway is lipid metabolism; malonyl-CoA biosynthesis; malonyl-CoA from acetyl-CoA: step 1/1. Its function is as follows. Component of the acetyl coenzyme A carboxylase (ACC) complex. Biotin carboxylase (BC) catalyzes the carboxylation of biotin on its carrier protein (BCCP) and then the CO(2) group is transferred by the transcarboxylase to acetyl-CoA to form malonyl-CoA. This chain is Acetyl-coenzyme A carboxylase carboxyl transferase subunit beta, found in Enterococcus faecalis (strain ATCC 700802 / V583).